Here is a 337-residue protein sequence, read N- to C-terminus: Ketol-acid reductoisomerase (NADP(+)) (337 aa).

The KARI N-terminal Rossmann domain occupies 1–180; it reads MQVYYDKDAD…GGTKGGVIET (180 aa). NADP(+) is bound by residues 24–27, Arg47, and Ser51; that span reads YGSQ. The active site involves His106. Gly132 is an NADP(+) binding site. The 146-residue stretch at 181–326 folds into the KARI C-terminal knotted domain; it reads TFREETETDL…AQLRAMMPWI (146 aa). Mg(2+) is bound by residues Asp189, Glu193, Glu225, and Glu229. Residue Ser250 participates in substrate binding.

Belongs to the ketol-acid reductoisomerase family. It depends on Mg(2+) as a cofactor.

It carries out the reaction (2R)-2,3-dihydroxy-3-methylbutanoate + NADP(+) = (2S)-2-acetolactate + NADPH + H(+). The enzyme catalyses (2R,3R)-2,3-dihydroxy-3-methylpentanoate + NADP(+) = (S)-2-ethyl-2-hydroxy-3-oxobutanoate + NADPH + H(+). The protein operates within amino-acid biosynthesis; L-isoleucine biosynthesis; L-isoleucine from 2-oxobutanoate: step 2/4. Its pathway is amino-acid biosynthesis; L-valine biosynthesis; L-valine from pyruvate: step 2/4. Functionally, involved in the biosynthesis of branched-chain amino acids (BCAA). Catalyzes an alkyl-migration followed by a ketol-acid reduction of (S)-2-acetolactate (S2AL) to yield (R)-2,3-dihydroxy-isovalerate. In the isomerase reaction, S2AL is rearranged via a Mg-dependent methyl migration to produce 3-hydroxy-3-methyl-2-ketobutyrate (HMKB). In the reductase reaction, this 2-ketoacid undergoes a metal-dependent reduction by NADPH to yield (R)-2,3-dihydroxy-isovalerate. This chain is Ketol-acid reductoisomerase (NADP(+)), found in Neisseria meningitidis serogroup A / serotype 4A (strain DSM 15465 / Z2491).